Here is a 550-residue protein sequence, read N- to C-terminus: Chaperonin GroEL (550 aa).

Residues 30–33, Lys51, 87–91, Gly415, and Asp496 contribute to the ATP site; these read TLGP and DGTTT.

The protein belongs to the chaperonin (HSP60) family. Forms a cylinder of 14 subunits composed of two heptameric rings stacked back-to-back. Interacts with the co-chaperonin GroES.

The protein resides in the cytoplasm. It catalyses the reaction ATP + H2O + a folded polypeptide = ADP + phosphate + an unfolded polypeptide.. In terms of biological role, together with its co-chaperonin GroES, plays an essential role in assisting protein folding. The GroEL-GroES system forms a nano-cage that allows encapsulation of the non-native substrate proteins and provides a physical environment optimized to promote and accelerate protein folding. The polypeptide is Chaperonin GroEL (Rickettsia typhi (strain ATCC VR-144 / Wilmington)).